Reading from the N-terminus, the 367-residue chain is Glycolate oxidase 1 (367 aa).

Met1 bears the N-acetylmethionine mark. Tyr24 is a glyoxylate binding site. Residues 77 to 79 (PTA), Ser106, 127 to 129 (QLY), and Thr155 contribute to the FMN site. Glyoxylate is bound at residue Tyr129. Residue Arg164 participates in glyoxylate binding. FMN is bound by residues Lys230 and Ser252. 2 residues coordinate glyoxylate: His254 and Arg257. The active-site Proton acceptor is His254. Residues 285–289 (DGGVR) and 308–309 (GR) contribute to the FMN site.

Belongs to the FMN-dependent alpha-hydroxy acid dehydrogenase family. As to quaternary structure, homotetramer. It depends on FMN as a cofactor.

Its subcellular location is the peroxisome. The enzyme catalyses glycolate + O2 = glyoxylate + H2O2. The protein operates within photosynthesis; photorespiration; glycine from 2-phosphoglycolate: step 2/3. Its function is as follows. Catalyzes the oxidation of glycolate to glyoxylate, with a reduction of O2 to H2O2. Is a key enzyme in photorespiration in green plants. This Arabidopsis thaliana (Mouse-ear cress) protein is Glycolate oxidase 1 (GLO1).